Consider the following 491-residue polypeptide: Transmembrane protein 200A (491 aa).

Topologically, residues 1–61 (MIATGGVITG…RGKIRLYSPS (61 aa)) are cytoplasmic. Residues 16–41 (RQDSARSQQHVNLSPSPATQEKKPIR) are disordered. Over residues 20–34 (ARSQQHVNLSPSPAT) the composition is skewed to polar residues. A helical transmembrane segment spans residues 62 to 82 (GFFLILGVLISIIGIAMAVLG). Over 83 to 126 (YWPQKEHFIDAETTLSTNETQVIRNEGGVVVRFFEQHLHSDKMK) the chain is Extracellular. Asn-100 carries N-linked (GlcNAc...) asparagine glycosylation. The helical transmembrane segment at 127-147 (MLGPFTMGIGIFIFICANAIL) threads the bilayer. The Cytoplasmic segment spans residues 148–491 (HENRDKETKI…LKRGTSETRF (344 aa)). A Phosphoserine modification is found at Ser-350.

The protein belongs to the TMEM200 family. Expressed in cerebellum.

Its subcellular location is the membrane. The protein is Transmembrane protein 200A (TMEM200A) of Homo sapiens (Human).